The primary structure comprises 156 residues: ATP synthase subunit b (156 aa).

A helical transmembrane segment spans residues 7-27 (LFVQAIVFLILVLFTMKFVWP).

Belongs to the ATPase B chain family. As to quaternary structure, F-type ATPases have 2 components, F(1) - the catalytic core - and F(0) - the membrane proton channel. F(1) has five subunits: alpha(3), beta(3), gamma(1), delta(1), epsilon(1). F(0) has three main subunits: a(1), b(2) and c(10-14). The alpha and beta chains form an alternating ring which encloses part of the gamma chain. F(1) is attached to F(0) by a central stalk formed by the gamma and epsilon chains, while a peripheral stalk is formed by the delta and b chains.

The protein resides in the cell inner membrane. F(1)F(0) ATP synthase produces ATP from ADP in the presence of a proton or sodium gradient. F-type ATPases consist of two structural domains, F(1) containing the extramembraneous catalytic core and F(0) containing the membrane proton channel, linked together by a central stalk and a peripheral stalk. During catalysis, ATP synthesis in the catalytic domain of F(1) is coupled via a rotary mechanism of the central stalk subunits to proton translocation. In terms of biological role, component of the F(0) channel, it forms part of the peripheral stalk, linking F(1) to F(0). This is ATP synthase subunit b from Paracidovorax citrulli (strain AAC00-1) (Acidovorax citrulli).